Here is a 174-residue protein sequence, read N- to C-terminus: RNA pyrophosphohydrolase (174 aa).

The Nudix hydrolase domain maps to 6–149 (GFRANVGIII…KRDVYRKVMK (144 aa)). Positions 38–59 (GGVDDGETAEEAMYRELYEEVG) match the Nudix box motif.

It belongs to the Nudix hydrolase family. RppH subfamily. The cofactor is a divalent metal cation.

Functionally, accelerates the degradation of transcripts by removing pyrophosphate from the 5'-end of triphosphorylated RNA, leading to a more labile monophosphorylated state that can stimulate subsequent ribonuclease cleavage. The protein is RNA pyrophosphohydrolase of Shewanella sp. (strain MR-7).